The following is a 333-amino-acid chain: DNA-directed RNA polymerase subunit alpha (333 aa).

An alpha N-terminal domain (alpha-NTD) region spans residues 1-233 (MVQEKLRFST…DLFIPFLHAE (233 aa)). The tract at residues 266–333 (KKEIALKSIF…DILKIQKYFT (68 aa)) is alpha C-terminal domain (alpha-CTD).

It belongs to the RNA polymerase alpha chain family. In terms of assembly, in plastids the minimal PEP RNA polymerase catalytic core is composed of four subunits: alpha, beta, beta', and beta''. When a (nuclear-encoded) sigma factor is associated with the core the holoenzyme is formed, which can initiate transcription.

The protein resides in the plastid. It is found in the chloroplast. The catalysed reaction is RNA(n) + a ribonucleoside 5'-triphosphate = RNA(n+1) + diphosphate. In terms of biological role, DNA-dependent RNA polymerase catalyzes the transcription of DNA into RNA using the four ribonucleoside triphosphates as substrates. The protein is DNA-directed RNA polymerase subunit alpha of Phaseolus angularis (Azuki bean).